A 103-amino-acid chain; its full sequence is N(4)-acetylcytidine amidohydrolase (103 aa).

The ASCH domain maps to 6–94 (ITFFQRFQND…IAEIYPNQTQ (89 aa)). The Proton acceptor role is filled by Lys-21. Catalysis depends on Thr-24, which acts as the Nucleophile. The Proton donor role is filled by Glu-74.

This sequence belongs to the N(4)-acetylcytidine amidohydrolase family.

The enzyme catalyses N(4)-acetylcytidine + H2O = cytidine + acetate + H(+). It catalyses the reaction N(4)-acetyl-2'-deoxycytidine + H2O = 2'-deoxycytidine + acetate + H(+). The catalysed reaction is N(4)-acetylcytosine + H2O = cytosine + acetate + H(+). Functionally, catalyzes the hydrolysis of N(4)-acetylcytidine (ac4C). The chain is N(4)-acetylcytidine amidohydrolase (yqfB) from Salmonella typhi.